Reading from the N-terminus, the 186-residue chain is Elongation factor P (186 aa).

Belongs to the elongation factor P family.

Its subcellular location is the cytoplasm. It functions in the pathway protein biosynthesis; polypeptide chain elongation. Its function is as follows. Involved in peptide bond synthesis. Stimulates efficient translation and peptide-bond synthesis on native or reconstituted 70S ribosomes in vitro. Probably functions indirectly by altering the affinity of the ribosome for aminoacyl-tRNA, thus increasing their reactivity as acceptors for peptidyl transferase. The chain is Elongation factor P from Shewanella woodyi (strain ATCC 51908 / MS32).